Consider the following 1154-residue polypeptide: MPVRRGHVAPQNTFLDTIIRKFEGQSRKFIIANARVENCAVIYCNDGFCELCGYSRAEVMQRPCTCDFLHGPRTQRRAAAQIAQALLGAEERKVEIAFYRKDGSCFLCLVDVVPVKNEDGAVIMFILNFEVVMEKDMVGSPARDTNHRAPPTSWLAPGRAKTFRLKLPALLALTARETPVRPGGAGSAGAPGAVVVDVDLTPAAPSSESLALDEVTAMDNHVAGIGPAEERRALVGSGSPPACAPGPHPSPRAHSLNPDGSGSSCSLARTRSRESCASVRRASSADDIEAMRAGALPPPPRHASTGAMHPLRSGLLNSTSDSDLVRYRTISKIPQITLNFVDLKGDPFLASPTSDREIIAPKIKERTHNVTEKVTQVLSLGADVLPEYKLQAPRIHRWTILHYSPFKAVWDWLILLLVIYTAVFTPYSAAFLLKETEEGSQAPDCGYACQPLAVVDLIVDIMFIVDILINFRTTYVNANEEVVSHPGRIAVHYFKGWFLIDMVAAIPFDLLIFGSGSEELIGLLKTARLLRLVRVARKLDRYSEYGAAVLFLLMCTFALIAHWLACIWYAIGNMEQPNMDSHIGWLHNLGDQIGKPYNSSGLGGPSIKDKYVTALYFTFSSLTSVGFGNVSPNTNSEKIFSICVMLIGSLMYASIFGNVSAIIQRLYSGTARYHTQMLRVREFIRFHQIPNPLRQRLEEYFQHAWSYTNGIDMNAVLKGFPECLQADICLHLNRSLLQHCKPFRGATKGCLRALAMKFKTTHAPPGDTLVHAGDLLTALYFISRGSIEILRGDVVVAILGKNDIFGEPLNLYARPGKSNGDVRALTYCDLHKIHRDDLLEVLDMYPEFSDHFWSSLEITFNLRDTNMIPGSPGSTELEGGFNRQRKRKLSFRRRTDKDPEQPGEVSALGPSRAGAGPSGRGQQGGPWGESLSSGPSSPESSEDEGPGRSSSPLRLVPFSSPRPPGELPGGDPLTEDVEKSSDTCNPLSGAFSGVSNIFSFWGDSRGRQYQELPRCPAPAPAPSLLNIPLSSPGRRPRGDVESRLDALQRQLNRLETRLSADMATVLQLLQRQMTLVPPAYSAVTTPGPGPASTSPLLPVSPIPTLTLDSLSQVSQFMACEELPQDGPARRLSLPGQLGALTSQPLHRHGSDPGS.

The Cytoplasmic segment spans residues Met-1–Tyr-403. The PAS domain occupies Val-41–His-70. The PAC domain occupies Arg-92–Asp-144. A disordered region spans residues Ala-233–Arg-312. At Ser-239 the chain carries Phosphoserine. A compositionally biased stretch (polar residues) spans Pro-258 to Arg-269. Phosphoserine occurs at positions 283, 284, 320, and 351. The helical transmembrane segment at Ser-404–Phe-424 threads the bilayer. The Extracellular portion of the chain corresponds to Thr-425–Gln-450. A helical transmembrane segment spans residues Pro-451–Phe-471. Residues Arg-472–Lys-495 are Cytoplasmic-facing. A helical transmembrane segment spans residues Gly-496–Gly-516. Topologically, residues Ser-517–Leu-520 are extracellular. Residues Ile-521–Arg-541 form a helical; Voltage-sensor membrane-spanning segment. The Cytoplasmic portion of the chain corresponds to Tyr-542–Ala-547. The chain crosses the membrane as a helical span at residues Ala-548 to Trp-568. The Extracellular segment spans residues Tyr-569–Tyr-611. An intramembrane region (pore-forming) is located at residues Val-612–Pro-632. The short motif at Ser-624–Asn-629 is the Selectivity filter element. The Extracellular portion of the chain corresponds to Asn-633–Lys-638. Residues Ile-639–Val-659 form a helical membrane-spanning segment. At Ser-660 to Ser-1154 the chain is on the cytoplasmic side. The tract at residues Pro-742 to Leu-842 is cNMP-binding domain. Residues Gly-870–Asn-985 are disordered. Residues Ser-871 and Ser-874 each carry the phosphoserine modification. Positions Arg-883–Arg-892 are enriched in basic residues. Gly residues predominate over residues Gly-916–Trp-927. Positions Gly-928–Glu-939 are enriched in low complexity. Arg-1014 is subject to Omega-N-methylarginine. Residues Arg-1037–Thr-1064 adopt a coiled-coil conformation. The disordered stretch occupies residues Asp-1125 to Ser-1154. At Ser-1132 the chain carries Phosphoserine.

This sequence belongs to the potassium channel family. H (Eag) (TC 1.A.1.20) subfamily. Kv11.1/KCNH2 sub-subfamily. As to quaternary structure, the potassium channel is probably composed of a homo- or heterotetrameric complex of pore-forming alpha subunits that can associate with modulating beta subunits. Interacts with DNAJB12 and DNAJB14; chaperones DNAJB12 and DNAJB14 promote tetramerization. Heteromultimer with KCNH6/ERG2 and KCNH7/ERG3. Interacts with ALG10B. Forms a stable complex with KCNE1 or KCNE2, and that this heteromultimerization regulates Inward rectifier potassium channel activity. Interacts with CANX. The core-glycosylated, but not the fully glycosylated form interacts with RNF207. Interacts with NDFIP1 and NDFIP2; this interaction decreases the cell membrane expression by targeting KCNH2, through interaction with NEDD4L, for the degradation through the multivesicular bodies (MVBs)-lysosomal pathway. In terms of processing, phosphorylated on serine and threonine residues. Phosphorylation by PKA inhibits ion conduction.

The protein localises to the cell membrane. The enzyme catalyses K(+)(in) = K(+)(out). In terms of biological role, pore-forming (alpha) subunit of voltage-gated inwardly rectifying potassium channel. Characterized by unusual gating kinetics by producing relatively small outward currents during membrane depolarization and large inward currents during subsequent repolarization which reflect a rapid inactivation during depolarization and quick recovery from inactivation but slow deactivation (closing) during repolarization. Channel properties are modulated by cAMP and subunit assembly. Forms a stable complex with KCNE1 or KCNE2, and that this heteromultimerization regulates inward rectifier potassium channel activity. The chain is Voltage-gated inwardly rectifying potassium channel KCNH2 from Sus scrofa (Pig).